The chain runs to 456 residues: Exodeoxyribonuclease 7 large subunit (456 aa).

Residues 1 to 103 (MLPSQSPAIF…DYQIIVESMQ (103 aa)) are binds ssDNA, also required to bind the small subunit.

Belongs to the XseA family. In terms of assembly, heterooligomer composed of two different subunits with an approximate ratio of 4:1 for small to large subunit. Also estimated to have a 6:1 ration for small to large subunits. Does not require a metal cofactor. is required as a cofactor.

Its subcellular location is the cytoplasm. The enzyme catalyses Exonucleolytic cleavage in either 5'- to 3'- or 3'- to 5'-direction to yield nucleoside 5'-phosphates.. Bidirectionally degrades single-stranded DNA into large acid-insoluble oligonucleotides, which are then degraded further into small acid-soluble oligonucleotides. It can degrade 3' or 5' ss regions extending from the termini of duplex DNA molecules and displaced ss regions. It can also excise thymine dimers in vitro. ssDNA-binding requires both subunits. Required for production of the mature 5'-end of retron Ec78 or Ec83 msDNA. Overproduction of this subunit in the absence of an equivalent quantity of the small subunit is toxic, causing cell elongation and chromosome fragmentation or loss; its toxicity is mostly suppressed by RecA. The chain is Exodeoxyribonuclease 7 large subunit from Escherichia coli (strain K12).